The chain runs to 239 residues: MKNNIITPRYNLEGVFLRQIHSFVCRKGRTTTSQLSAIKKYWSLIGVDFQLNALNFSSIFKHRAPIILEIGFGSGESLVKTAMNFPDKNFLGIEVYKSGIGSCLHYASSYQIQNLRIIYYDATEVMYNMIPDDTLSKVQIFFPDPWHKKRHHKRRLLKNIFLKIITKKLIIDGILHIATDSESYAFYILDEIKDIKNYKNLSEKNNFVKRPVSRIITKFEKKGLLQGKKIFDLMFQLKK.

Residues E69, E94, D121, and D144 each contribute to the S-adenosyl-L-methionine site. D144 is an active-site residue. Substrate is bound by residues K148, D180, and 217–220 (TKFE).

The protein belongs to the class I-like SAM-binding methyltransferase superfamily. TrmB family. Monomer.

The catalysed reaction is guanosine(46) in tRNA + S-adenosyl-L-methionine = N(7)-methylguanosine(46) in tRNA + S-adenosyl-L-homocysteine. The protein operates within tRNA modification; N(7)-methylguanine-tRNA biosynthesis. Its function is as follows. Catalyzes the formation of N(7)-methylguanine at position 46 (m7G46) in tRNA. This is tRNA (guanine-N(7)-)-methyltransferase from Buchnera aphidicola subsp. Acyrthosiphon pisum (strain Tuc7).